Consider the following 3431-residue polypeptide: KICSTOR complex protein SZT2 (3431 aa).

Disordered stretches follow at residues 699-731, 1067-1101, and 1162-1231; these read SKEP…PQQA, LRDP…TLPS, and KPKL…GADG. The segment at 1082–1188 is mediates interaction with the GATOR1 complex; it reads VAKDRAGNST…ATGTKATESQ (107 aa). Polar residues-rich tracts occupy residues 1088-1101 and 1182-1212; these read GNST…TLPS and TKAT…TPSC. S1275 is subject to Phosphoserine. The segment at 1356–1378 is disordered; the sequence is PPSPGPLSPGPFSSSIEEGPEPR. S1415 is modified (phosphoserine). Disordered regions lie at residues 1512-1534, 1629-1678, 1806-1883, 2113-2148, 2450-2512, 2735-2756, and 2866-2899; these read YRES…SDAD, PPAS…HPGL, RAED…PGET, PPSL…SDAV, TEAG…LEEG, ASPP…GGPL, and ETCA…DVPP. T1640 carries the post-translational modification Phosphothreonine. Polar residues predominate over residues 1641 to 1657; sequence SESSASFPRSPGQPSSL. Phosphoserine is present on S1650. The span at 1832 to 1854 shows a compositional bias: low complexity; the sequence is PLISLPSLSQGGSQPGPSRGLSL. A compositionally biased stretch (polar residues) spans 2118–2129; sequence LSRSQEPISSED. A compositionally biased stretch (basic and acidic residues) spans 2460 to 2473; that stretch reads TTDDIVLDRPEDTR. Low complexity predominate over residues 2739–2749; that stretch reads LSREQGRLSGS.

Part of the KICSTOR complex composed of KPTN, ITFG2, KICS2 and SZT2. SZT2 probably serves as a link between the other three proteins in the KICSTOR complex and may mediate the direct interaction with the GATOR complex via GATOR1. The KICSTOR complex interacts directly with the GATOR1 complex and most probably indirectly with the GATOR2 complex in an amino acid-independent manner. As to expression, mostly expressed in brain, spinal cord and lung.

Its subcellular location is the lysosome membrane. The protein localises to the peroxisome. Its function is as follows. As part of the KICSTOR complex functions in the amino acid-sensing branch of the TORC1 signaling pathway. Recruits, in an amino acid-independent manner, the GATOR1 complex to the lysosomal membranes and allows its interaction with GATOR2 and the RAG GTPases. Functions upstream of the RAG GTPases and is required to negatively regulate mTORC1 signaling in absence of amino acids. In absence of the KICSTOR complex mTORC1 is constitutively localized to the lysosome and activated. The KICSTOR complex is also probably involved in the regulation of mTORC1 by glucose. May play a role in the cellular response to oxidative stress. In Mus musculus (Mouse), this protein is KICSTOR complex protein SZT2.